Consider the following 396-residue polypeptide: Stearoyl-[acyl-carrier-protein] 9-desaturase 2, chloroplastic (396 aa).

The transit peptide at 1–32 (MALRPNDVTLRLTPPLAAAARRNRRAAAGGVR) directs the protein to the chloroplast. Fe cation is bound by residues E138, E176, H179, E229, E262, and H265.

Belongs to the fatty acid desaturase type 2 family. In terms of assembly, homodimer. It depends on Fe(2+) as a cofactor.

It is found in the plastid. The protein localises to the chloroplast. The catalysed reaction is octadecanoyl-[ACP] + 2 reduced [2Fe-2S]-[ferredoxin] + O2 + 2 H(+) = (9Z)-octadecenoyl-[ACP] + 2 oxidized [2Fe-2S]-[ferredoxin] + 2 H2O. It functions in the pathway lipid metabolism; fatty acid metabolism. Converts stearoyl-ACP to oleoyl-ACP by introduction of a cis double bond between carbons 9 and 10 of the acyl chain. Required for the repression of the salicylic acid (SA) signaling pathway. The chain is Stearoyl-[acyl-carrier-protein] 9-desaturase 2, chloroplastic (SSI2) from Oryza sativa subsp. indica (Rice).